We begin with the raw amino-acid sequence, 359 residues long: MSFTVHLNKILQKYQDLEADLNGGKLDNKELALISKEYSNLKPIIEKLNRYLKAHENIKYLQQVIDTEQDLELKSIAEVELYDTLNYLPKLEEEVKISLLPKESDDHKNAIIEVRAGTGGDEAALFAASLFQMYNKYAERKKWKFELLSISDTEIGGCKEASALISGNGVFANLKFESGVHRVQRIPKTESNGRIHTSAATVVVLPEAEEVDVKIDAKDLKIDTYRASGAGGQHVNTTDSAVRITHIPTGVVVSQQDEKSQHKNKAKAMKILYARLYDLEKQKSKQEQAISRKVQVGTGDRSERIRTYNYPQGRVTDHRINLTLYKIEEIIQEGKLDEIINNLISENEAKKIADSNIQF.

N5-methylglutamine is present on Gln233.

This sequence belongs to the prokaryotic/mitochondrial release factor family. Methylated by PrmC. Methylation increases the termination efficiency of RF1.

The protein resides in the cytoplasm. Its function is as follows. Peptide chain release factor 1 directs the termination of translation in response to the peptide chain termination codons UAG and UAA. In Orientia tsutsugamushi (strain Boryong) (Rickettsia tsutsugamushi), this protein is Peptide chain release factor 1.